The following is a 657-amino-acid chain: Forkhead box protein O3 (657 aa).

Disordered stretches follow at residues 1–71 (MAEA…EGAA) and 216–320 (SSWW…ELDD). A DNA-binding region (fork-head) is located at residues 142–236 (WGNMSYADLI…KGGKAPRRRA (95 aa)). The span at 246-257 (TKSRGRAAKKKA) shows a compositional bias: basic residues. Residues 268 to 283 (DSPSQLSKWPGSPTSR) show a composition bias toward polar residues. The segment covering 284–296 (SSDKLDTWTDFRS) has biased composition (basic and acidic residues). The span at 297–307 (RTNSNASTISG) shows a compositional bias: polar residues.

Post-translationally, dephosphorylation may promote translocation to the nucleus where the protein induces transcription of target genes and triggers apoptosis. Localized to the animal hemisphere during early cleavage stages. At the late neurula, localized in the anterior neural plate, neural crest cells and in the hatching gland. As development progresses, expression becomes less localized, being observed in a variety of organs and tissues including the head, branchial arches and somites by stage 32.

Its subcellular location is the cytoplasm. It localises to the cytosol. The protein localises to the nucleus. Functionally, transcriptional activator that recognizes and binds to the DNA sequence 5'-[AG]TAAA[TC]A-3' and regulates different processes, such as apoptosis and autophagy. Acts as a positive regulator of autophagy in skeletal muscle: in starved cells, enters the nucleus following dephosphorylation and binds the promoters of autophagy genes, thereby activating their expression, resulting in proteolysis of skeletal muscle proteins. Triggers apoptosis in the absence of survival factors, including neuronal cell death upon oxidative stress. In response to metabolic stress, translocates into the mitochondria where it promotes mtDNA transcription. Also acts as a key regulator of chondrogenic commitment of skeletal progenitor cells in response to lipid availability: when lipids levels are low, translocates to the nucleus and promotes expression of sox9, which induces chondrogenic commitment and suppresses fatty acid oxidation. Also acts as a key regulator of regulatory T-cells (Treg) differentiation. In Xenopus laevis (African clawed frog), this protein is Forkhead box protein O3.